The primary structure comprises 76 residues: Envelope small membrane protein (76 aa).

Residues 1–14 lie on the Virion surface side of the membrane; it reads MLQLVNDNGLVVNV. The helical transmembrane segment at 15-35 threads the bilayer; the sequence is ILWLFVLFFLLIISITFVQLV. The Intravirion segment spans residues 36-76; it reads NLCFTCHRLCNSAVYTPIGRLYRVYKSYMRIDPLPSTVIDV.

The protein belongs to the alphacoronaviruses E protein family. As to quaternary structure, homopentamer. Interacts with membrane protein M in the budding compartment of the host cell, which is located between endoplasmic reticulum and the Golgi complex. Interacts with Nucleoprotein. Interacts with host IRF3; this interaction inhibits type I IFN production.

It localises to the host Golgi apparatus membrane. The protein localises to the host endoplasmic reticulum. Its function is as follows. Plays a central role in virus morphogenesis and assembly. Acts as a viroporin and self-assembles in host membranes forming pentameric protein-lipid pores that allow ion transport. Also plays a role in the induction of apoptosis. Counteracts the production of type I interferon by interacting with host IRF3 component and preventing its translocation to the host nucleus. In Sus scrofa (Pig), this protein is Envelope small membrane protein.